We begin with the raw amino-acid sequence, 235 residues long: SMN complex subunit yip11/gem2 (235 aa).

A disordered region spans residues 1–34 (MPSKRKRNPLQYQTSGSLDEETNQRSAFPQIDNN). A compositionally biased stretch (polar residues) spans 24 to 34 (QRSAFPQIDNN). A phosphoserine mark is found at serine 117 and serine 118.

The protein belongs to the gemin-2 family. In terms of assembly, part of the core SMN complex at least composed of smn1, yip11/gem2, gem6, gem7 and gem8. Interacts with smn1; the interaction is direct.

The protein resides in the nucleus. Its function is as follows. The SMN complex catalyzes the assembly of small nuclear ribonucleoproteins (snRNPs), the building blocks of the spliceosome, and thereby plays an important role in the splicing of cellular pre-mRNAs. Most spliceosomal snRNPs contain a common set of Sm proteins smb1, smd1, smd2, smd3, sme1, smf1 and smg1 that assemble in a heptameric protein ring on the Sm site of the small nuclear RNA to form the core snRNP. In the cytosol, the Sm proteins smd1, smd2, sme1, smf1 and smg1 (5Sm) are trapped in an inactive 6S pICln-Sm complex by the chaperone saf5. To complete assembly of core snRNPs, the SMN complex accepts 5Sm from saf5. Binding of snRNA inside 5Sm ultimately triggers eviction of the SMN complex, thereby allowing binding of smd3 and smb1 to complete assembly of the core snRNP. Within the SMN complex, yip11/gem2 constrains the conformation of 5Sm, thereby promoting 5Sm binding to snRNA containing the snRNP code (a nonameric Sm site and a 3'-adjacent stem-loop), thus preventing progression of assembly until a cognate substrate is bound. The protein is SMN complex subunit yip11/gem2 (yip11) of Schizosaccharomyces pombe (strain 972 / ATCC 24843) (Fission yeast).